The following is a 225-amino-acid chain: Heptaprenylglyceryl phosphate synthase (225 aa).

Sn-glycerol 1-phosphate is bound at residue Lys-6. Mg(2+) is bound by residues Asp-8 and Thr-34. Sn-glycerol 1-phosphate contacts are provided by residues Tyr-153 to Gly-158, Gly-183, and Gly-203 to Asn-204.

This sequence belongs to the GGGP/HepGP synthase family. Group I subfamily. In terms of assembly, homodimer. Mg(2+) is required as a cofactor.

The enzyme catalyses sn-glycerol 1-phosphate + all-trans-heptaprenyl diphosphate = 3-heptaprenyl-sn-glycero-1-phosphate + diphosphate. Its pathway is membrane lipid metabolism; glycerophospholipid metabolism. In terms of biological role, prenyltransferase that catalyzes in vivo the transfer of the heptaprenyl moiety of heptaprenyl pyrophosphate (HepPP; 35 carbon atoms) to the C3 hydroxyl of sn-glycerol-1-phosphate (G1P), producing heptaprenylglyceryl phosphate (HepGP). This reaction is an ether-bond-formation step in the biosynthesis of archaea-type G1P-based membrane lipids found in Bacillales. In Listeria monocytogenes serotype 4b (strain CLIP80459), this protein is Heptaprenylglyceryl phosphate synthase.